Consider the following 595-residue polypeptide: Elongation factor 4 (595 aa).

Residues 2–183 enclose the tr-type G domain; sequence KNIRNFCIIA…AIVEQVPAPA (182 aa). Residues 14–19 and 130–133 each bind GTP; these read DHGKST and NKVD.

The protein belongs to the TRAFAC class translation factor GTPase superfamily. Classic translation factor GTPase family. LepA subfamily.

It is found in the cell inner membrane. It catalyses the reaction GTP + H2O = GDP + phosphate + H(+). In terms of biological role, required for accurate and efficient protein synthesis under certain stress conditions. May act as a fidelity factor of the translation reaction, by catalyzing a one-codon backward translocation of tRNAs on improperly translocated ribosomes. Back-translocation proceeds from a post-translocation (POST) complex to a pre-translocation (PRE) complex, thus giving elongation factor G a second chance to translocate the tRNAs correctly. Binds to ribosomes in a GTP-dependent manner. The chain is Elongation factor 4 from Porphyromonas gingivalis (strain ATCC 33277 / DSM 20709 / CIP 103683 / JCM 12257 / NCTC 11834 / 2561).